Consider the following 235-residue polypeptide: BPI fold-containing family A member 2 (235 aa).

Positions M1–S20 are cleaved as a signal peptide. An intrachain disulfide couples C161 to C204.

This sequence belongs to the BPI/LBP/Plunc superfamily. Plunc family. Predominates in the parotid glands, present in smaller amounts (1/10) in the submaxillary glands and in the sublingual glands, and at lower amount in the pancreas but undetectable in the liver. Found also in lacrimal gland.

The protein localises to the secreted. Has strong antibacterial activity against P.aeruginosa. In Mus musculus (Mouse), this protein is BPI fold-containing family A member 2 (Bpifa2).